The following is a 258-amino-acid chain: U6 snRNA phosphodiesterase 1 (258 aa).

Positions 1–20 (MALVDYGGSSSSASEDEDCT) are disordered. H117 (proton acceptor) is an active-site residue. Residues 117–119 (HLS), Y200, and 202–208 (PASFHVS) contribute to the AMP site. UMP-binding positions include Y200 and 204-208 (SFHVS). The active-site Proton donor is H206.

The protein belongs to the 2H phosphoesterase superfamily. USB1 family.

Its subcellular location is the nucleus. The enzyme catalyses a 3'-end uridylyl-uridine-RNA = a 3'-end 2',3'-cyclophospho-uridine-RNA + uridine. Its function is as follows. 3'-5' RNA exonuclease that trims the 3' end of oligo(U) tracts of the pre-U6 small nuclear RNA (snRNA) molecule, leading to the formation of a mature U6 snRNA 3' end-terminated with a 2',3'-cyclic phosphate. Participates in the U6 snRNA 3' end processing that prevents U6 snRNA degradation. The protein is U6 snRNA phosphodiesterase 1 of Drosophila melanogaster (Fruit fly).